Reading from the N-terminus, the 198-residue chain is Dephospho-CoA kinase (198 aa).

Residues 4–198 (FLGLTGGIAS…LSDLLQEIGR (195 aa)) enclose the DPCK domain. 12-17 (ASGKST) lines the ATP pocket.

The protein belongs to the CoaE family.

Its subcellular location is the cytoplasm. It catalyses the reaction 3'-dephospho-CoA + ATP = ADP + CoA + H(+). Its pathway is cofactor biosynthesis; coenzyme A biosynthesis; CoA from (R)-pantothenate: step 5/5. Its function is as follows. Catalyzes the phosphorylation of the 3'-hydroxyl group of dephosphocoenzyme A to form coenzyme A. The sequence is that of Dephospho-CoA kinase from Lactobacillus johnsonii (strain CNCM I-12250 / La1 / NCC 533).